A 525-amino-acid chain; its full sequence is tRNA-splicing endonuclease subunit Sen54 (525 aa).

Position 1 is an N-acetylmethionine (methionine 1). Positions 1–46 (MEPEPEPGSVEVPAGRVLSASELRAARSRSQKLPQRSHGPKDFLPD) are disordered. Residues 7–23 (PGSVEVPAGRVLSASEL) are compositionally biased toward low complexity. The residue at position 178 (serine 178) is a Phosphoserine. Tyrosine 180 bears the Phosphotyrosine mark. Residues 220–232 (LPPVSLAASSSPA) show a composition bias toward low complexity. The interval 220 to 273 (LPPVSLAASSSPACDQSSQYPEEKSQDSSPRQGSELPLQFLGSSEPCSDLARED) is disordered.

This sequence belongs to the SEN54 family. In terms of assembly, tRNA splicing endonuclease is a heterotetramer composed of TSEN2, TSEN15, TSEN34/LENG5 and TSEN54. tRNA splicing endonuclease complex also contains proteins of the pre-mRNA 3'-end processing machinery such as CLP1, CPSF1, CPSF4 and CSTF2.

It is found in the nucleus. Its subcellular location is the nucleolus. Non-catalytic subunit of the tRNA-splicing endonuclease complex, a complex responsible for identification and cleavage of the splice sites in pre-tRNA. It cleaves pre-tRNA at the 5' and 3' splice sites to release the intron. The products are an intron and two tRNA half-molecules bearing 2',3' cyclic phosphate and 5'-OH termini. There are no conserved sequences at the splice sites, but the intron is invariably located at the same site in the gene, placing the splice sites an invariant distance from the constant structural features of the tRNA body. The tRNA splicing endonuclease is also involved in mRNA processing via its association with pre-mRNA 3'-end processing factors, establishing a link between pre-tRNA splicing and pre-mRNA 3'-end formation, suggesting that the endonuclease subunits function in multiple RNA-processing events. The chain is tRNA-splicing endonuclease subunit Sen54 (Tsen54) from Mus musculus (Mouse).